The sequence spans 822 residues: AP-1 complex subunit gamma-1 (822 aa).

Residues 593-604 are compositionally biased toward polar residues; it reads NGPSEIVQTNGE. The interval 593–627 is disordered; that stretch reads NGPSEIVQTNGETEPAPLETKPPPSGPQPTSQAND. One can recognise a GAE domain in the interval 702 to 817; it reads PGIPSITAYS…QDLAEVNNFP (116 aa).

The protein belongs to the adaptor complexes large subunit family. In terms of assembly, adaptor protein complex 1 (AP-1) is a heterotetramer composed of two large adaptins (gamma-type subunit AP1G1 and beta-type subunit AP1B1), a medium adaptin (mu-type subunit AP1M1 or AP1M2) and a small adaptin (sigma-type subunit AP1S1 or AP1S2 or AP1S3). Interacts (via GAE domain) with RABEP1. Interacts with EPS15. Interacts with SYNRG/gamma-synergin. Interacts (via GAE domain) with AP1AR (via coiled-coil domain). Interacts with CLN3 (via dileucine motif); this interaction facilitates lysosomal targeting. Interacts (via GAE domain) with AFTPH/aftiphilin; the interaction is required to recruit AFTPH/aftiphilin to the perinuclear region of the cell. As to expression, widely expressed.

Its subcellular location is the golgi apparatus. The protein localises to the cytoplasmic vesicle. The protein resides in the clathrin-coated vesicle membrane. It is found in the cytoplasm. It localises to the perinuclear region. Its subcellular location is the clathrin-coated vesicle. The protein localises to the membrane. The protein resides in the clathrin-coated pit. Its function is as follows. Subunit of clathrin-associated adaptor protein complex 1 that plays a role in protein sorting in the late-Golgi/trans-Golgi network (TGN) and/or endosomes. The AP complexes mediate both the recruitment of clathrin to membranes and the recognition of sorting signals within the cytosolic tails of transmembrane cargo molecules. In association with AFTPH/aftiphilin in the aftiphilin/p200/gamma-synergin complex, involved in the trafficking of transferrin from early to recycling endosomes, and the membrane trafficking of furin and the lysosomal enzyme cathepsin D between the trans-Golgi network (TGN) and endosomes. In Mus musculus (Mouse), this protein is AP-1 complex subunit gamma-1 (Ap1g1).